The primary structure comprises 39 residues: uncharacterized protein (39 aa).

This is an uncharacterized protein from Treponema pallidum (strain Nichols).